The primary structure comprises 184 residues: Muscle-specific protein 20 (184 aa).

Residues 17–122 form the Calponin-homology (CH) domain; it reads PEMDKEAQEW…NTIFALGRAT (106 aa). Residues 157 to 181 form a Calponin-like repeat; that stretch reads VGLQAGSNKGATQAGQNLGAGRKIL.

The protein belongs to the calponin family. As to expression, found in synchronous muscle; not found in asynchronous indirect flight muscle.

This is Muscle-specific protein 20 (Mp20) from Drosophila melanogaster (Fruit fly).